A 496-amino-acid chain; its full sequence is MSGLPRSVPDVLDPLGPGAPVLVAGGRVTGQAVAAVLTRFGATPTVCDDDPVMLRPHAERGLPTVSSSDAVQQITGYALVVASPGFSPATPLLAAAAAAGVPIWGDVELAWRLDAAGCYGPPRSWLVVTGTNGKTTTTSMLHAMLIAGGRRAVLCGNIGSAVLDVLDEPAELLAVELSSFQLHWAPSLRPEAGAVLNIAEDHLDWHATMAEYTAAKARVLTGGVAVAGLDDSRAAALLDGSPAQVRVGFRLGEPAARELGVRDAHLVDRAFSDDLTLLPVASIPVPGPVGVLDALAAAALARSVGVPAGAIADAVTSFRVGRHRAEVVAVADGITYVDDSKATNPHAARASVLAYPRVVWIAGGLLKGASLHAEVAAMASRLVGAVLIGRDRAAVAEALSRHAPDVPVVQVVAGEDTGMPATVEVPVACVLDVAKDDKAGETVGAAVMTAAVAAARRMAQPGDTVLLAPAGASFDQFTGYADRGEAFATAVRAVIR.

130–136 (GTNGKTT) contributes to the ATP binding site.

This sequence belongs to the MurCDEF family. Interacts with PknA. In terms of processing, phosphorylated by PknA.

The protein localises to the cytoplasm. The catalysed reaction is UDP-N-acetyl-alpha-D-muramoyl-L-alanine + D-glutamate + ATP = UDP-N-acetyl-alpha-D-muramoyl-L-alanyl-D-glutamate + ADP + phosphate + H(+). It participates in cell wall biogenesis; peptidoglycan biosynthesis. In terms of biological role, cell wall formation. Catalyzes the addition of glutamate to the nucleotide precursor UDP-N-acetylmuramoyl-L-alanine (UMA). In Mycobacterium tuberculosis (strain ATCC 25177 / H37Ra), this protein is UDP-N-acetylmuramoylalanine--D-glutamate ligase.